Consider the following 213-residue polypeptide: Uridine kinase (213 aa).

Glycine 15 to serine 22 is an ATP binding site.

Belongs to the uridine kinase family.

It localises to the cytoplasm. It catalyses the reaction uridine + ATP = UMP + ADP + H(+). The enzyme catalyses cytidine + ATP = CMP + ADP + H(+). It functions in the pathway pyrimidine metabolism; CTP biosynthesis via salvage pathway; CTP from cytidine: step 1/3. Its pathway is pyrimidine metabolism; UMP biosynthesis via salvage pathway; UMP from uridine: step 1/1. The protein is Uridine kinase of Pectobacterium carotovorum subsp. carotovorum (strain PC1).